Reading from the N-terminus, the 491-residue chain is MKILFATSEAHPLIKTGGLADVSGSLPDAYHHLKQKVRMVMPAYGDIWEKVSGVKQLSELSIAACGRQLHVRIHVASAEGIDVPIWLVDIPELFHRPGNPYLALDGKDWWDNGERFAVFSKVVAEIAMNRAGLKWQPDLVQTNDWQTGLVSALLTLEAERPKTVFTIHNMAYAGLFPKSLFEGLGLPWSWWEPHDGIEFYDNMSMLKAGIQMADWVTTVSPTYAKEITFPEYAYGLEGVLIKRLDEGRLVGILNGIDHDVWNPKTDPFIRYHYSVDKGRVAAKKRNKKDMLDFWDLPKAVVDADDPVIGLVGRLVPQKGIDLVLEVLPELIEQTNVRFVIVGTGDSLFEYQLTELAHQYPERLMIYIGYSESLAHKVEAGADLFLMPSRFEPCGLNQLYSLAYGTPPIVHSTGGLSDTVVNATKENLATGQATGFVFYDPSRHALKSTILHALHLFSKKGTWQKLQKNGMRQDFSWTRSAKQYLALFKAMV.

K15 contributes to the ADP-alpha-D-glucose binding site.

This sequence belongs to the glycosyltransferase 1 family. Bacterial/plant glycogen synthase subfamily.

The enzyme catalyses [(1-&gt;4)-alpha-D-glucosyl](n) + ADP-alpha-D-glucose = [(1-&gt;4)-alpha-D-glucosyl](n+1) + ADP + H(+). It participates in glycan biosynthesis; glycogen biosynthesis. In terms of biological role, synthesizes alpha-1,4-glucan chains using ADP-glucose. The polypeptide is Glycogen synthase (Hydrogenovibrio crunogenus (strain DSM 25203 / XCL-2) (Thiomicrospira crunogena)).